Reading from the N-terminus, the 194-residue chain is dTTP/UTP pyrophosphatase (194 aa).

Asp73 (proton acceptor) is an active-site residue.

Belongs to the Maf family. YhdE subfamily. It depends on a divalent metal cation as a cofactor.

It localises to the cytoplasm. The enzyme catalyses dTTP + H2O = dTMP + diphosphate + H(+). The catalysed reaction is UTP + H2O = UMP + diphosphate + H(+). Its function is as follows. Nucleoside triphosphate pyrophosphatase that hydrolyzes dTTP and UTP. May have a dual role in cell division arrest and in preventing the incorporation of modified nucleotides into cellular nucleic acids. In Geotalea uraniireducens (strain Rf4) (Geobacter uraniireducens), this protein is dTTP/UTP pyrophosphatase.